A 128-amino-acid polypeptide reads, in one-letter code: Small nuclear ribonucleoprotein SmD3a (128 aa).

Residues 7-79 enclose the Sm domain; it reads IPVKLLHESS…VRFLVIPDML (73 aa). The segment at 90 to 128 is disordered; that stretch reads GKGKSASLGVGRGRGAAMRAKGTGRGTGGGRGAVPPVRR. Residues 112 to 121 are compositionally biased toward gly residues; the sequence is TGRGTGGGRG.

The protein belongs to the snRNP core protein family. Expressed in young seedlings, roots, leaves, flowers and immature siliques.

The protein resides in the cytoplasm. The protein localises to the cytosol. It localises to the nucleus. Functionally, core component of the spliceosomal U1, U2, U4 and U5 small nuclear ribonucleoproteins (snRNPs), the building blocks of the spliceosome. May play a minor role in the splicing of cellular pre-mRNAs. The polypeptide is Small nuclear ribonucleoprotein SmD3a (Arabidopsis thaliana (Mouse-ear cress)).